The chain runs to 337 residues: Anthranilate phosphoribosyltransferase (337 aa).

Residues G81, 84 to 85 (GD), S89, 91 to 94 (NVST), 109 to 117 (KHGNRAATS), and A121 each bind 5-phospho-alpha-D-ribose 1-diphosphate. Residue G81 coordinates anthranilate. S93 provides a ligand contact to Mg(2+). An anthranilate-binding site is contributed by N112. R167 provides a ligand contact to anthranilate. The Mg(2+) site is built by D226 and E227.

This sequence belongs to the anthranilate phosphoribosyltransferase family. Homodimer. Mg(2+) is required as a cofactor.

The enzyme catalyses N-(5-phospho-beta-D-ribosyl)anthranilate + diphosphate = 5-phospho-alpha-D-ribose 1-diphosphate + anthranilate. It functions in the pathway amino-acid biosynthesis; L-tryptophan biosynthesis; L-tryptophan from chorismate: step 2/5. Functionally, catalyzes the transfer of the phosphoribosyl group of 5-phosphorylribose-1-pyrophosphate (PRPP) to anthranilate to yield N-(5'-phosphoribosyl)-anthranilate (PRA). This Methylorubrum populi (strain ATCC BAA-705 / NCIMB 13946 / BJ001) (Methylobacterium populi) protein is Anthranilate phosphoribosyltransferase.